A 221-amino-acid chain; its full sequence is Thymidylate kinase (221 aa).

G12–S19 is an ATP binding site.

The protein belongs to the thymidylate kinase family.

The catalysed reaction is dTMP + ATP = dTDP + ADP. In terms of biological role, phosphorylation of dTMP to form dTDP in both de novo and salvage pathways of dTTP synthesis. The sequence is that of Thymidylate kinase from Paracidovorax citrulli (strain AAC00-1) (Acidovorax citrulli).